A 181-amino-acid chain; its full sequence is NAD(P)H-quinone oxidoreductase subunit I, chloroplastic (181 aa).

4Fe-4S ferredoxin-type domains are found at residues 55 to 84 (GRIHFEFDKCIACEVCVRVCPINLPVVDWE) and 95 to 124 (KSYSIDFGVCIFCGNCVEYCPTNCLSMTEE). 8 residues coordinate [4Fe-4S] cluster: Cys64, Cys67, Cys70, Cys74, Cys104, Cys107, Cys110, and Cys114.

Belongs to the complex I 23 kDa subunit family. NDH is composed of at least 16 different subunits, 5 of which are encoded in the nucleus. Requires [4Fe-4S] cluster as cofactor.

It is found in the plastid. It localises to the chloroplast thylakoid membrane. The enzyme catalyses a plastoquinone + NADH + (n+1) H(+)(in) = a plastoquinol + NAD(+) + n H(+)(out). It catalyses the reaction a plastoquinone + NADPH + (n+1) H(+)(in) = a plastoquinol + NADP(+) + n H(+)(out). Its function is as follows. NDH shuttles electrons from NAD(P)H:plastoquinone, via FMN and iron-sulfur (Fe-S) centers, to quinones in the photosynthetic chain and possibly in a chloroplast respiratory chain. The immediate electron acceptor for the enzyme in this species is believed to be plastoquinone. Couples the redox reaction to proton translocation, and thus conserves the redox energy in a proton gradient. The chain is NAD(P)H-quinone oxidoreductase subunit I, chloroplastic from Physcomitrium patens (Spreading-leaved earth moss).